The chain runs to 317 residues: mRNA 3'-end-processing protein yth-1 (317 aa).

Residues 1-20 are disordered; the sequence is MATTTQTTTNSLPSGAGGPQ. 5 consecutive C3H1-type zinc fingers follow at residues 51-78, 93-120, 121-149, 150-177, and 179-202; these read PADR…HVTA, GFGS…HEYN, LRKM…HIDP, LSRL…HFRR, and LCLY…HPRW. Over residues 202–217 the composition is skewed to basic and acidic residues; the sequence is WTADKDMEKPRAKGEG. Positions 202-317 are disordered; it reads WTADKDMEKP…GRGGFRGKGH (116 aa). Over residues 223-237 the composition is skewed to low complexity; the sequence is QQQQQQQQQQHMGDA. Residues 253–288 show a composition bias toward basic and acidic residues; the sequence is YMDRERERDRDNREREMMMQGRDRDGGGHDRHKDRF. Residues 289–301 show a composition bias toward gly residues; the sequence is GGGGGGGGGGRGR. Over residues 302-317 the composition is skewed to basic residues; the sequence is GGWRGRGRGGFRGKGH.

Belongs to the CPSF4/YTH1 family.

The protein resides in the nucleus. Component of the cleavage factor I (CF I) involved in pre-mRNA 3'-end processing. The protein is mRNA 3'-end-processing protein yth-1 (yth-1) of Neurospora crassa (strain ATCC 24698 / 74-OR23-1A / CBS 708.71 / DSM 1257 / FGSC 987).